The primary structure comprises 112 residues: MLDEKSSNTASVVVLCTAPDEATAQDLAAKVLAEKLAACATLIPGATSLYYWEGKLEQEYEVQMILKTTVSHQQALLECLKSHHPYQTPELLVLPVTHGDTDYLSWLNASLR.

Residues C16, H83, and H84 each contribute to the Cu cation site.

It belongs to the CutA family. As to quaternary structure, homotrimer. Requires Cu cation as cofactor.

It localises to the cytoplasm. Involved in resistance toward heavy metals. The protein is Divalent-cation tolerance protein CutA of Shigella boydii serotype 18 (strain CDC 3083-94 / BS512).